The chain runs to 265 residues: Undecaprenyl-diphosphatase (265 aa).

Helical transmembrane passes span 1–21 (MDIF…FLPI), 39–59 (QGVG…VLYF), 84–104 (ALAW…LALL), 114–134 (ASVI…ADWL), 144–164 (LNWK…VPGT), 187–207 (FSFL…LLEV), 218–238 (GFLI…HFFL), and 244–264 (VGMW…YAVL).

It belongs to the UppP family.

The protein localises to the cell inner membrane. The enzyme catalyses di-trans,octa-cis-undecaprenyl diphosphate + H2O = di-trans,octa-cis-undecaprenyl phosphate + phosphate + H(+). Catalyzes the dephosphorylation of undecaprenyl diphosphate (UPP). Confers resistance to bacitracin. In Marinobacter nauticus (strain ATCC 700491 / DSM 11845 / VT8) (Marinobacter aquaeolei), this protein is Undecaprenyl-diphosphatase.